The sequence spans 244 residues: Secreted RxLR effector protein RXLR-C05 (244 aa).

The N-terminal stretch at 1–21 is a signal peptide; that stretch reads MRGAFYVATAFLIASSTRTAA. Basic and acidic residues predominate over residues 37–46; sequence LPVGDSDTKS. A disordered region spans residues 37-56; that stretch reads LPVGDSDTKSLPRRSLKGSG. Positions 50-68 match the RxLR-dEER motif; that stretch reads RSLKGSGDRLEIPVAEEER.

It belongs to the RxLR effector family.

It localises to the secreted. The protein resides in the host cytoplasm. Its subcellular location is the host nucleus. Secreted effector that suppresses pattern-triggered immunity (PTI) in plant host. This chain is Secreted RxLR effector protein RXLR-C05, found in Plasmopara halstedii (Downy mildew of sunflower).